Reading from the N-terminus, the 619-residue chain is Chaperone protein HscA homolog (619 aa).

This sequence belongs to the heat shock protein 70 family.

Functionally, chaperone involved in the maturation of iron-sulfur cluster-containing proteins. Has a low intrinsic ATPase activity which is markedly stimulated by HscB. This chain is Chaperone protein HscA homolog, found in Chromobacterium violaceum (strain ATCC 12472 / DSM 30191 / JCM 1249 / CCUG 213 / NBRC 12614 / NCIMB 9131 / NCTC 9757 / MK).